Consider the following 800-residue polypeptide: MSEIIQDLSLEDVLGDRFGRYSKYIIQERALPDVRDGLKPVQRRILYAMYSSGNTHDKNFRKSAKTVGDVIGQYHPHGDFSVYEAMVRLSQDWKLRHVLIEMHGNNGSIDNDPPAAMRYTEAKLSLLAEELLRDINKETVSFIPNYDDTTLEPMVLPSRFPNLLVNGSTGISAGYATDIPPHNLAEVIQATLKYIDNPDITVNQLMKYIKGPDFPTGGIIQGIDGIKKAYESGKGRIIVRSKVEEETLRNGRKQLIITEIPYEVNKSSLVKRIDELRADKKVDGIVEVRDETDRTGLRIAIELKKDVNSESIKNYLYKNSDLQISYNFNMVAISDGRPKLMGIRQIIDSYLNHQIEVVANRTKFELDNAEKRMHIVEGLIKALSILDKVIELIRSSKNKRDAKENLIEVFEFTEEQAEAIVMLQLYRLTNTDIVALEGEHKELEALIKQLRHILDNHDALLNVIKEELNEIKKKFKSERLSLIEAEIEEIKIDKEVMVPSEEVILSMTRHGYIKRTSIRSFNASGVEDIGLKDGDSLLKHQEVNTQDTVLVFTNKGRYLFIPVHKLADIRWKELGQHVSQIVPIEEDEVVINVFNEKDFNTDAFYVFATQNGMIKKSTVPLFKTTRFNKPLIATKVKENDDLISVMRFEKDQLITVITNKGMSLTYNTSELSDTGLRAAGVKSINLKAEDFVVMTEGVSENDTILMATQRGSLKRISFKILQVAKRAQRGITLLKELKKNPHRIVAAHVVTGEHSQYTLYSKSNEEHGLINDIHKSEQYTNGSFIVDTDDFGEVIDMYIS.

A Topo IIA-type catalytic domain is found at 31–495 (LPDVRDGLKP…EIEEIKIDKE (465 aa)). Residue tyrosine 119 is the O-(5'-phospho-DNA)-tyrosine intermediate of the active site.

The protein belongs to the type II topoisomerase GyrA/ParC subunit family. ParC type 2 subfamily. Heterotetramer composed of ParC and ParE.

The protein localises to the cell membrane. It carries out the reaction ATP-dependent breakage, passage and rejoining of double-stranded DNA.. Functionally, topoisomerase IV is essential for chromosome segregation. It relaxes supercoiled DNA. Performs the decatenation events required during the replication of a circular DNA molecule. The sequence is that of DNA topoisomerase 4 subunit A from Staphylococcus aureus (strain Mu50 / ATCC 700699).